Reading from the N-terminus, the 172-residue chain is Male-specific submandibular salivary gland protein (172 aa).

A signal peptide spans 1 to 15 (MVKFLLLALALGVSC). N-linked (GlcNAc...) asparagine glycosylation is present at N41. Intrachain disulfides connect C60/C64 and C79/C170.

It belongs to the calycin superfamily. Lipocalin family. In terms of processing, N-glycosylated. In terms of tissue distribution, expressed in acinar cells of the submandibular salivary gland from where it is secreted into saliva (at protein level). Also released from the submandibular salivary gland into blood and excreted in urine (at protein level). Expressed in the lacrimal gland from where it is secreted into tears (at protein level).

It is found in the secreted. The protein localises to the cytoplasm. The polypeptide is Male-specific submandibular salivary gland protein (Mesocricetus auratus (Golden hamster)).